Consider the following 734-residue polypeptide: Probable carboxypeptidase X1 (734 aa).

Residues 1-20 (MWGLLLALAAFAPAVGPALG) form the signal peptide. A disordered region spans residues 30 to 62 (AQPGTTKVPGSTPALHSSPAQPPAETANGTSEQ). Residues 32-48 (PGTTKVPGSTPALHSSP) show a composition bias toward polar residues. Residues Asn-57, Asn-210, Asn-220, and Asn-318 are each glycosylated (N-linked (GlcNAc...) asparagine). The 162-residue stretch at 113–274 (TGCPPLGLES…PCLRAEILAC (162 aa)) folds into the F5/8 type C domain. Cys-115 and Cys-274 form a disulfide bridge. The region spanning 298–621 (QHHNYKAMRK…DALLTYLEQV (324 aa)) is the Peptidase M14 domain. Zn(2+)-binding residues include His-360 and Glu-363. Residues Asn-428 and Asn-472 are each glycosylated (N-linked (GlcNAc...) asparagine). His-498 lines the Zn(2+) pocket. Residue Glu-591 is the Proton donor/acceptor of the active site.

This sequence belongs to the peptidase M14 family. Requires Zn(2+) as cofactor.

The protein resides in the secreted. In terms of biological role, may be involved in cell-cell interactions. No carboxypeptidase activity was found yet. This chain is Probable carboxypeptidase X1 (CPXM1), found in Homo sapiens (Human).